The chain runs to 430 residues: Aspartate aminotransferase, mitochondrial (430 aa).

A mitochondrion-targeting transit peptide spans 1–29 (MALLHSGRVLPGIAAAFHPGLAAAASARA). Thr48 bears the Phosphothreonine mark. Lys59 carries the post-translational modification N6-acetyllysine. Position 65 (Gly65) interacts with substrate. Lys73 is subject to N6-acetyllysine; alternate. Lys73 is subject to N6-succinyllysine; alternate. Position 82 is an N6-acetyllysine (Lys82). Position 90 is an N6-acetyllysine; alternate (Lys90). Lys90 carries the post-translational modification N6-succinyllysine; alternate. At Tyr96 the chain carries 3'-nitrotyrosine; alternate. Tyr96 is subject to Phosphotyrosine; alternate. 2 positions are modified to N6-acetyllysine; alternate: Lys107 and Lys122. An N6-succinyllysine; alternate mark is found at Lys107 and Lys122. Residue Ser143 is modified to Phosphoserine. Lys159 carries the N6-acetyllysine; alternate modification. Lys159 bears the N6-succinyllysine; alternate mark. Trp162 serves as a coordination point for substrate. Position 185 is an N6-acetyllysine; alternate (Lys185). An N6-succinyllysine; alternate modification is found at Lys185. Asn215 serves as a coordination point for substrate. The residue at position 227 (Lys227) is an N6-succinyllysine. Lys234 bears the N6-acetyllysine mark. 2 positions are modified to N6-acetyllysine; alternate: Lys279 and Lys296. Residue Lys279 is modified to N6-(pyridoxal phosphate)lysine; alternate. Lys296 bears the N6-succinyllysine; alternate mark. Lys302 is modified (N6-acetyllysine). The residue at position 309 (Lys309) is an N6-acetyllysine; alternate. Lys309 is subject to N6-succinyllysine; alternate. Residue Arg313 is modified to Asymmetric dimethylarginine. Thr333 carries the post-translational modification Phosphothreonine. Lys338 is subject to N6-acetyllysine; alternate. Lys338 is modified (N6-succinyllysine; alternate). The residue at position 345 (Lys345) is an N6-acetyllysine. N6-acetyllysine; alternate is present on Lys363. Lys363 bears the N6-succinyllysine; alternate mark. An N6-acetyllysine mark is found at Lys364 and Lys387. Lys396 and Lys404 each carry N6-acetyllysine; alternate. An N6-succinyllysine; alternate mark is found at Lys396 and Lys404. A substrate-binding site is contributed by Arg407.

It belongs to the class-I pyridoxal-phosphate-dependent aminotransferase family. Homodimer. Pyridoxal 5'-phosphate serves as cofactor.

The protein resides in the mitochondrion matrix. Its subcellular location is the cell membrane. The enzyme catalyses L-aspartate + 2-oxoglutarate = oxaloacetate + L-glutamate. It carries out the reaction L-kynurenine + 2-oxoglutarate = kynurenate + L-glutamate + H2O. In terms of biological role, catalyzes the irreversible transamination of the L-tryptophan metabolite L-kynurenine to form kynurenic acid (KA). As a member of the malate-aspartate shuttle, it has a key role in the intracellular NAD(H) redox balance. Is important for metabolite exchange between mitochondria and cytosol, and for amino acid metabolism. Facilitates cellular uptake of long-chain free fatty acids. The polypeptide is Aspartate aminotransferase, mitochondrial (Homo sapiens (Human)).